We begin with the raw amino-acid sequence, 150 residues long: UPF0506 protein SJCHGC02381 (150 aa).

The signal sequence occupies residues 1-18 (MNTCIQLLILCLVTVINS). N-linked (GlcNAc...) asparagine glycans are attached at residues Asn-20, Asn-24, Asn-32, Asn-36, Asn-48, Asn-52, Asn-64, and Asn-110. The segment at 22–49 (TDNSTENTIKNETENATETELPETFENE) is disordered. The span at 36 to 49 (NATETELPETFENE) shows a compositional bias: acidic residues. 3 disulfides stabilise this stretch: Cys-116–Cys-130, Cys-123–Cys-134, and Cys-129–Cys-139.

The protein belongs to the UPF0506 family.

Its subcellular location is the secreted. This chain is UPF0506 protein SJCHGC02381, found in Schistosoma japonicum (Blood fluke).